Consider the following 339-residue polypeptide: Putative pectinesterase 10 (339 aa).

A signal peptide spans 1-28 (MKGVTIHNFCYSYFKVCLLVMSLAYGSA). N-linked (GlcNAc...) asparagine glycosylation occurs at N112. A substrate-binding site is contributed by T116. D169 functions as the Proton donor in the catalytic mechanism. D190 acts as the Nucleophile in catalysis. Substrate contacts are provided by R252 and W254. Residue N322 is glycosylated (N-linked (GlcNAc...) asparagine).

The protein belongs to the pectinesterase family. As to expression, expressed in siliques.

The protein localises to the secreted. The protein resides in the cell wall. The catalysed reaction is [(1-&gt;4)-alpha-D-galacturonosyl methyl ester](n) + n H2O = [(1-&gt;4)-alpha-D-galacturonosyl](n) + n methanol + n H(+). The protein operates within glycan metabolism; pectin degradation; 2-dehydro-3-deoxy-D-gluconate from pectin: step 1/5. In terms of biological role, acts in the modification of cell walls via demethylesterification of cell wall pectin. The chain is Putative pectinesterase 10 (PME10) from Arabidopsis thaliana (Mouse-ear cress).